The primary structure comprises 1485 residues: Glutamate receptor ionotropic, NMDA 2B (1485 aa).

A signal peptide spans 1–26 (MKPRAECCSPKFWLVLAVLAVSGSRA). Residues 27–557 (RSQKSPPSIG…SAFLEPFSAD (531 aa)) lie on the Extracellular side of the membrane. The N-linked (GlcNAc...) asparagine glycan is linked to asparagine 74. Cysteine 86 and cysteine 321 are joined by a disulfide. 2 residues coordinate Zn(2+): histidine 127 and glutamate 284. N-linked (GlcNAc...) asparagine glycosylation is found at asparagine 341, asparagine 348, asparagine 444, and asparagine 491. Cystine bridges form between cysteine 429/cysteine 456 and cysteine 436/cysteine 457. L-glutamate contacts are provided by threonine 514 and arginine 519. N-linked (GlcNAc...) asparagine glycosylation is present at asparagine 542. The chain crosses the membrane as a helical span at residues 558-576 (VWVMMFVMLLIVSAVAVFV). The Cytoplasmic segment spans residues 577 to 603 (FEYFSPVGYNRCLADGREPGGPSFTIG). Positions 604-623 (KAIWLLWGLVFNNSVPVQNP) form an intramembrane region, discontinuously helical. The tract at residues 604–623 (KAIWLLWGLVFNNSVPVQNP) is pore-forming. At 624–630 (KGTTSKI) the chain is on the cytoplasmic side. Residues 631-646 (MVSVWAFFAVIFLASY) traverse the membrane as a helical segment. The Extracellular segment spans residues 647–817 (TANLAAFMIQ…VMSSQLDIDN (171 aa)). N-linked (GlcNAc...) asparagine glycosylation occurs at asparagine 688. L-glutamate-binding positions include 690 to 691 (ST) and aspartate 732. Cysteine 746 and cysteine 801 are joined by a disulfide. The helical transmembrane segment at 818–837 (MAGVFYMLGAAMALSLITFI) threads the bilayer. Residues 838 to 1485 (CEHLFYWQFR…EKLSSIESDV (648 aa)) lie on the Cytoplasmic side of the membrane. Phosphoserine is present on residues serine 882, serine 886, serine 917, and serine 920. Tyrosine 962 and tyrosine 1039 each carry phosphotyrosine. Serine 1058, serine 1061, and serine 1064 each carry phosphoserine. The disordered stretch occupies residues 1074 to 1097 (EGNAAKRRKQQYKDSLKKRPASAK). Phosphotyrosine occurs at positions 1109 and 1133. Residue serine 1143 is modified to Phosphoserine. Tyrosine 1155 is modified (phosphotyrosine). Positions 1162 to 1194 (FKRDSVSGGGPCTNRSHLKHGAGDKHGVVSGVP) are disordered. Residues serine 1255 and serine 1259 each carry the phosphoserine modification. Residues 1269–1278 (PVAVPSNAPS) are compositionally biased toward low complexity. Residues 1269–1302 (PVAVPSNAPSTKYPQSPTNSKAQKKTRNKLRRQH) form a disordered region. The span at 1280 to 1289 (KYPQSPTNSK) shows a compositional bias: polar residues. Basic residues predominate over residues 1290-1301 (AQKKTRNKLRRQ). Residues 1292–1304 (KKTRNKLRRQHSY) form an interaction with DAPK1 region. Serine 1303 carries the phosphoserine; by DAPK1 modification. Tyrosine 1475 bears the Phosphotyrosine mark. The PDZ-binding motif lies at 1483–1485 (SDV).

It belongs to the glutamate-gated ion channel (TC 1.A.10.1) family. NR2B/GRIN2B subfamily. As to quaternary structure, heterotetramer. Forms heterotetrameric channels composed of two GluN1/zeta subunits (GRIN1), and two identical GluN2/epsilon subunits (GRIN2A, GRIN2B, GRIN2C or GRIN2D) or GluN3 subunits (GRIN3A or GRIN3B) (in vitro). Can also form heterotetrameric channels that contain at least two GluN1 subunits and at least two different GluN2 subunits (or a combination of one GluN2 and one GluN3 subunits) (in vitro). In vivo, the subunit composition may depend on the expression levels of the different subunits. Found in a complex with GRIN1, GRIN3A and PPP2CB. Found in a complex with GRIN1 and GRIN3B. Interacts with MAGI3. Interacts with HIP1 and Neto1. Interacts with PDZ domains of PATJ, DLG3 and DLG4. Interacts with DAPK1. Found in a complex with GRIN1 and PRR7. Interacts with PRR7. Interacts with CAMK2A. Interacts with ARC; preventing ARC oligomerization. Interacts with TMEM25. Interacts (via the extreme C-terminus) with FRMPD2 (via the second PDZ domain); the interaction is direct and is likely to promote NMDAR-mediated neural signal transmission. Interacts with FAM81A; the interaction facilitates condensate formation via liquid-liquid phase separation. Phosphorylated on tyrosine residues. Phosphorylation at Ser-1303 by DAPK1 enhances synaptic NMDA receptor channel activity.

It is found in the cell membrane. The protein resides in the postsynaptic cell membrane. It localises to the cell projection. Its subcellular location is the dendrite. The protein localises to the late endosome. It is found in the lysosome. The protein resides in the cytoplasm. It localises to the cytoskeleton. The enzyme catalyses Ca(2+)(in) = Ca(2+)(out). It carries out the reaction Na(+)(in) = Na(+)(out). It catalyses the reaction K(+)(in) = K(+)(out). In terms of biological role, component of N-methyl-D-aspartate (NMDA) receptors (NMDARs) that function as heterotetrameric, ligand-gated cation channels with high calcium permeability and voltage-dependent block by Mg(2+). Participates in synaptic plasticity for learning and memory formation by contributing to the long-term depression (LTD) of hippocampus membrane currents. Channel activation requires binding of the neurotransmitter L-glutamate to the GluN2 subunit, glycine or D-serine binding to the GluN1 subunit, plus membrane depolarization to eliminate channel inhibition by Mg(2+). NMDARs mediate simultaneously the potasium efflux and the influx of calcium and sodium. Each GluN2 subunit confers differential attributes to channel properties, including activation, deactivation and desensitization kinetics, pH sensitivity, Ca2(+) permeability, and binding to allosteric modulators. In concert with DAPK1 at extrasynaptic sites, acts as a central mediator for stroke damage. Its phosphorylation at Ser-1303 by DAPK1 enhances synaptic NMDA receptor channel activity inducing injurious Ca2+ influx through them, resulting in an irreversible neuronal death. The protein is Glutamate receptor ionotropic, NMDA 2B of Canis lupus familiaris (Dog).